The primary structure comprises 146 residues: 3-dehydroquinate dehydratase (146 aa).

Residue Tyr-22 is the Proton acceptor of the active site. Asn-73, His-79, and Asp-86 together coordinate substrate. Residue His-99 is the Proton donor of the active site. Substrate contacts are provided by residues 100–101 and Arg-110; that span reads IS.

The protein belongs to the type-II 3-dehydroquinase family. In terms of assembly, homododecamer.

The enzyme catalyses 3-dehydroquinate = 3-dehydroshikimate + H2O. Its pathway is metabolic intermediate biosynthesis; chorismate biosynthesis; chorismate from D-erythrose 4-phosphate and phosphoenolpyruvate: step 3/7. In terms of biological role, catalyzes a trans-dehydration via an enolate intermediate. The chain is 3-dehydroquinate dehydratase from Prochlorococcus marinus (strain MIT 9515).